A 440-amino-acid chain; its full sequence is Trigger factor (440 aa).

The PPIase FKBP-type domain maps to 160 to 253 (KDTVIGDALR…VTEVKRLELP (94 aa)).

It belongs to the FKBP-type PPIase family. Tig subfamily.

The protein resides in the cytoplasm. It catalyses the reaction [protein]-peptidylproline (omega=180) = [protein]-peptidylproline (omega=0). Involved in protein export. Acts as a chaperone by maintaining the newly synthesized protein in an open conformation. Functions as a peptidyl-prolyl cis-trans isomerase. This chain is Trigger factor, found in Chlorobium chlorochromatii (strain CaD3).